The primary structure comprises 673 residues: ATP-binding cassette sub-family G member 8 (673 aa).

The segment covering 1-11 (MAGKAAEERGL) has biased composition (basic and acidic residues). Positions 1-25 (MAGKAAEERGLPKGATPQDTSGLQD) are disordered. Residues 1 to 416 (MAGKAAEERG…ISNDFRDLPT (416 aa)) are Cytoplasmic-facing. In terms of domain architecture, ABC transporter spans 47 to 313 (LEVRDLNYQV…FTAIGYPCPR (267 aa)). Positions 411–665 (FRDLPTLLIH…VLYYVSLRFI (255 aa)) constitute an ABC transmembrane type-2 domain. The chain crosses the membrane as a helical span at residues 417-437 (LLIHGAEACLMSMTIGFLYFG). The Extracellular portion of the chain corresponds to 438 to 447 (HGSIQLSFMD). Residues 448 to 468 (TAALLFMIGALIPFNVILDVI) traverse the membrane as a helical segment. The Cytoplasmic portion of the chain corresponds to 469–497 (SKCYSERAMLYYELEDGLYTTGPYFFAKI). Residues 498–518 (LGELPEHCAYIIIYGMPTYWL) traverse the membrane as a helical segment. Topologically, residues 519 to 527 (ANLRPGLQP) are extracellular. The helical transmembrane segment at 528–548 (FLLHFLLVWLVVFCCRIMALA) threads the bilayer. The Cytoplasmic segment spans residues 549–555 (AAALLPT). Residues 556-576 (FHMASFFSNALYNSFYLAGGF) traverse the membrane as a helical segment. Residues 577 to 639 (MINLSSLWTV…LSVMELDSYP (63 aa)) are Extracellular-facing. N619 carries N-linked (GlcNAc...) asparagine glycosylation. The helical transmembrane segment at 640 to 660 (LYAIYLIVIGLSGGFMVLYYV) threads the bilayer. The Cytoplasmic portion of the chain corresponds to 661–673 (SLRFIKQKPSQDW).

It belongs to the ABC transporter superfamily. ABCG family. Eye pigment precursor importer (TC 3.A.1.204) subfamily. As to quaternary structure, heterodimer with ABCG8. Requires Mg(2+) as cofactor. In terms of processing, N-glycosylated. As to expression, predominantly expressed in the liver. Low expression levels in the small intestine and colon. Very low levels in other tissues, including brain, heart and spleen.

The protein resides in the cell membrane. The protein localises to the apical cell membrane. It carries out the reaction cholesterol(in) + ATP + H2O = cholesterol(out) + ADP + phosphate + H(+). It catalyses the reaction sitosterol(in) + ATP + H2O = sitosterol(out) + ADP + phosphate + H(+). The ATPase activity of the heterodimer is stimulated by cholate. Taurocholate, glycocholate, taurochenodeoxycholate, glycochenodeoxycholate and taurodeoxycholate also stimulate ATPase activity, but to a lower degree. Glycodeoxycholate has no significant effect on ATPase activity. ATPase activity is inhibited by vanadate and by berillium fluoride. ABCG5 and ABCG8 form an obligate heterodimer that mediates Mg(2+)- and ATP-dependent sterol transport across the cell membrane. Plays an essential role in the selective transport of the dietary cholesterol in and out of the enterocytes and in the selective sterol excretion by the liver into bile. Required for normal sterol homeostasis. The heterodimer with ABCG5 has ATPase activity. The sequence is that of ATP-binding cassette sub-family G member 8 from Homo sapiens (Human).